A 77-amino-acid polypeptide reads, in one-letter code: MGAKCCKPVSCGMCKKTENTLIDYKGNPILLANEFTVLTDTESEEEGMADLEKPLLEKVVAKCDTEAEKKLPCKSKK.

The N-myristoyl glycine; by host moiety is linked to residue glycine 2.

This sequence belongs to the herpesviridae cytoplasmic envelopment protein 3 family. Interacts with cytoplasmic envelopment protein 2; this interaction is essential for the proper localization of each protein to the assembly complex and thus for the production of infectious virus. Post-translationally, myristoylation and palmitoylation (probably on one or more of the nearby cysteines at the N-terminus) enable membrane-binding and Golgi apparatus-specific targeting and are essential for efficient packaging. Phosphorylated. Phosphorylation does not seem to be required for recycling to the host Golgi apparatus. Packaging is selective for underphosphorylated forms.

The protein localises to the virion tegument. The protein resides in the virion membrane. Its subcellular location is the host cell membrane. It localises to the host Golgi apparatus membrane. Plays an important role in the cytoplasmic envelopment of tegument proteins and capsids during the assembly and egress processes. Also participates in viral entry at the fusion step probably by regulating the core fusion machinery. The protein is Cytoplasmic envelopment protein 3 (U71) of Human herpesvirus 6A (strain Uganda-1102) (HHV-6 variant A).